A 272-amino-acid chain; its full sequence is HMP-PP phosphatase (272 aa).

The Nucleophile role is filled by aspartate 8. Residues aspartate 8, aspartate 10, and aspartate 212 each coordinate Mg(2+).

Belongs to the HAD-like hydrolase superfamily. Cof family. It depends on Mg(2+) as a cofactor.

The enzyme catalyses 4-amino-2-methyl-5-(diphosphooxymethyl)pyrimidine + H2O = 4-amino-2-methyl-5-(phosphooxymethyl)pyrimidine + phosphate + H(+). Catalyzes the hydrolysis of 4-amino-2-methyl-5-hydroxymethylpyrimidine pyrophosphate (HMP-PP) to 4-amino-2-methyl-5-hydroxymethylpyrimidine phosphate (HMP-P). This is HMP-PP phosphatase from Salmonella schwarzengrund (strain CVM19633).